The primary structure comprises 509 residues: Protein Jade-1 (509 aa).

Residues Met-1–Ser-45 form a disordered region. Residues Asp-60–Trp-80 are interaction with KAT7/HBO1 and histones. Positions Trp-80–His-188 are interaction with histones. Ser-89 bears the Phosphoserine mark. Thr-92 carries the post-translational modification Phosphothreonine. Residue Lys-114 forms a Glycyl lysine isopeptide (Lys-Gly) (interchain with G-Cter in SUMO2) linkage. The segment at Tyr-203 to Gly-253 adopts a PHD-type 1 zinc-finger fold. The segment at Gln-255 to Val-289 adopts a C2HC pre-PHD-type zinc-finger fold. The PHD-type 2 zinc finger occupies Leu-313–Ser-369. The segment at Lys-373–Pro-399 is disordered.

It belongs to the JADE family. In terms of assembly, component of the HBO1 complex composed at least of ING4 or ING5, KAT7/HBO1, MEAF6, and one of JADE1, JADE2 and JADE3. Interacts with NPHP4.

The protein localises to the nucleus. The protein resides in the chromosome. Its subcellular location is the cytoplasm. It localises to the cytoskeleton. It is found in the cilium basal body. Functionally, scaffold subunit of some HBO1 complexes, which have a histone H4 acetyltransferase activity. Plays a key role in HBO1 complex by directing KAT7/HBO1 specificity towards histone H4 acetylation (H4K5ac, H4K8ac and H4K12ac), regulating DNA replication initiation, regulating DNA replication initiation. May also promote acetylation of nucleosomal histone H4 by KAT5. Promotes apoptosis. May act as a renal tumor suppressor. Negatively regulates canonical Wnt signaling; at least in part, cooperates with NPHP4 in this function. In Bos taurus (Bovine), this protein is Protein Jade-1 (JADE1).